The following is a 227-amino-acid chain: Orotidine 5'-phosphate decarboxylase (227 aa).

Residues Asp-12, Lys-34, 61-70 (DLKLHDIPNT), Thr-117, Arg-178, Gln-187, Gly-207, and Arg-208 each bind substrate. Lys-63 acts as the Proton donor in catalysis.

Belongs to the OMP decarboxylase family. Type 1 subfamily. As to quaternary structure, homodimer.

It catalyses the reaction orotidine 5'-phosphate + H(+) = UMP + CO2. It functions in the pathway pyrimidine metabolism; UMP biosynthesis via de novo pathway; UMP from orotate: step 2/2. In terms of biological role, catalyzes the decarboxylation of orotidine 5'-monophosphate (OMP) to uridine 5'-monophosphate (UMP). The chain is Orotidine 5'-phosphate decarboxylase from Anaeromyxobacter dehalogenans (strain 2CP-1 / ATCC BAA-258).